Here is a 117-residue protein sequence, read N- to C-terminus: uncharacterized protein (117 aa).

Its subcellular location is the cytoplasm. The protein resides in the nucleus. This is an uncharacterized protein from Saccharomyces cerevisiae (strain ATCC 204508 / S288c) (Baker's yeast).